Reading from the N-terminus, the 240-residue chain is Probable transcriptional regulatory protein jhp_0149 (240 aa).

Belongs to the TACO1 family.

Its subcellular location is the cytoplasm. This chain is Probable transcriptional regulatory protein jhp_0149, found in Helicobacter pylori (strain J99 / ATCC 700824) (Campylobacter pylori J99).